A 393-amino-acid chain; its full sequence is NAD(P)H-quinone oxidoreductase subunit H, chloroplastic (393 aa).

It belongs to the complex I 49 kDa subunit family. NDH is composed of at least 16 different subunits, 5 of which are encoded in the nucleus.

The protein localises to the plastid. Its subcellular location is the chloroplast thylakoid membrane. The enzyme catalyses a plastoquinone + NADH + (n+1) H(+)(in) = a plastoquinol + NAD(+) + n H(+)(out). It catalyses the reaction a plastoquinone + NADPH + (n+1) H(+)(in) = a plastoquinol + NADP(+) + n H(+)(out). Functionally, NDH shuttles electrons from NAD(P)H:plastoquinone, via FMN and iron-sulfur (Fe-S) centers, to quinones in the photosynthetic chain and possibly in a chloroplast respiratory chain. The immediate electron acceptor for the enzyme in this species is believed to be plastoquinone. Couples the redox reaction to proton translocation, and thus conserves the redox energy in a proton gradient. This chain is NAD(P)H-quinone oxidoreductase subunit H, chloroplastic, found in Amborella trichopoda.